Reading from the N-terminus, the 378-residue chain is Probable tRNA sulfurtransferase (378 aa).

The region spanning 51 to 153 is the THUMP domain; the sequence is DANLEKLQYV…SDKTYLFSKT (103 aa). ATP is bound by residues 171–172, 196–197, arginine 253, glycine 275, and glutamine 284; these read LM and SF.

This sequence belongs to the ThiI family.

The protein resides in the cytoplasm. The catalysed reaction is [ThiI sulfur-carrier protein]-S-sulfanyl-L-cysteine + a uridine in tRNA + 2 reduced [2Fe-2S]-[ferredoxin] + ATP + H(+) = [ThiI sulfur-carrier protein]-L-cysteine + a 4-thiouridine in tRNA + 2 oxidized [2Fe-2S]-[ferredoxin] + AMP + diphosphate. It catalyses the reaction [ThiS sulfur-carrier protein]-C-terminal Gly-Gly-AMP + S-sulfanyl-L-cysteinyl-[cysteine desulfurase] + AH2 = [ThiS sulfur-carrier protein]-C-terminal-Gly-aminoethanethioate + L-cysteinyl-[cysteine desulfurase] + A + AMP + 2 H(+). It participates in cofactor biosynthesis; thiamine diphosphate biosynthesis. Functionally, catalyzes the ATP-dependent transfer of a sulfur to tRNA to produce 4-thiouridine in position 8 of tRNAs, which functions as a near-UV photosensor. Also catalyzes the transfer of sulfur to the sulfur carrier protein ThiS, forming ThiS-thiocarboxylate. This is a step in the synthesis of thiazole, in the thiamine biosynthesis pathway. The sulfur is donated as persulfide by IscS. The sequence is that of Probable tRNA sulfurtransferase from Mycoplasmopsis agalactiae (strain NCTC 10123 / CIP 59.7 / PG2) (Mycoplasma agalactiae).